A 340-amino-acid chain; its full sequence is Protein B17 (340 aa).

The protein belongs to the orthopoxvirus B17 protein family.

The sequence is that of Protein B17 from Vaccinia virus (strain Western Reserve) (VACV).